Here is a 332-residue protein sequence, read N- to C-terminus: 2,3-diketo-L-gulonate reductase (332 aa).

H44 (proton donor) is an active-site residue. Residues 168–174 (ITMVDMS), 224–225 (WK), and 304–306 (GHE) contribute to the NAD(+) site.

This sequence belongs to the LDH2/MDH2 oxidoreductase family. DlgD subfamily. As to quaternary structure, homodimer.

Its subcellular location is the cytoplasm. It carries out the reaction 3-dehydro-L-gulonate + NAD(+) = 2,3-dioxo-L-gulonate + NADH + H(+). It catalyses the reaction 3-dehydro-L-gulonate + NADP(+) = 2,3-dioxo-L-gulonate + NADPH + H(+). In terms of biological role, catalyzes the reduction of 2,3-diketo-L-gulonate in the presence of NADH, to form 3-keto-L-gulonate. In Escherichia coli O139:H28 (strain E24377A / ETEC), this protein is 2,3-diketo-L-gulonate reductase.